A 180-amino-acid chain; its full sequence is NADH-quinone oxidoreductase subunit I (180 aa).

4Fe-4S ferredoxin-type domains follow at residues 50-80 (LTRDPDGEERCVACNLCAVACPVGCISLQKA) and 90-119 (EFFRINFSRCIFCGLCEEACPTTAIQLTPD). 8 residues coordinate [4Fe-4S] cluster: Cys60, Cys63, Cys66, Cys70, Cys99, Cys102, Cys105, and Cys109.

Belongs to the complex I 23 kDa subunit family. As to quaternary structure, NDH-1 is composed of 13 different subunits. Subunits NuoA, H, J, K, L, M, N constitute the membrane sector of the complex. [4Fe-4S] cluster serves as cofactor.

The protein resides in the cell inner membrane. The catalysed reaction is a quinone + NADH + 5 H(+)(in) = a quinol + NAD(+) + 4 H(+)(out). In terms of biological role, NDH-1 shuttles electrons from NADH, via FMN and iron-sulfur (Fe-S) centers, to quinones in the respiratory chain. The immediate electron acceptor for the enzyme in this species is believed to be ubiquinone. Couples the redox reaction to proton translocation (for every two electrons transferred, four hydrogen ions are translocated across the cytoplasmic membrane), and thus conserves the redox energy in a proton gradient. This chain is NADH-quinone oxidoreductase subunit I, found in Shigella boydii serotype 4 (strain Sb227).